The primary structure comprises 317 residues: Type II methyltransferase M.MgeORF184P (317 aa).

This sequence belongs to the N(4)/N(6)-methyltransferase family.

It catalyses the reaction a 2'-deoxyadenosine in DNA + S-adenosyl-L-methionine = an N(6)-methyl-2'-deoxyadenosine in DNA + S-adenosyl-L-homocysteine + H(+). Its function is as follows. Probably recognizes the double-stranded sequence 5'-CTAT-3' and methylates A-3 on only one strand; as the bacterial DNA is methylated on this sequence and this is the only type II methylase in the genome, it is probably responsible for all of the methylation on this site in the genome. The chain is Type II methyltransferase M.MgeORF184P from Mycoplasma genitalium (strain ATCC 33530 / DSM 19775 / NCTC 10195 / G37) (Mycoplasmoides genitalium).